We begin with the raw amino-acid sequence, 397 residues long: Calponin-like protein clik-2 (397 aa).

6 Calponin-like repeats span residues 29–54 (LSQQAGTNKFETQKGMTAVGMPRWNI), 73–98 (LRVQCGTNQYASQKGETPIGASRFQV), 119–144 (IPKQAGDYGLASQAGEVSMGGHRNQV), 161–189 (LCFQNGTNLFASQTGMSAPPGLGAVRQAT), 209–234 (TPWYSGQNKFATQAGSGGFLKVRDVL), and 255–280 (VPLQSGTNKLASQRGMTGFGTPRNTQ). The segment at 301-397 (EETKPPGSAS…EEEEEEEEDE (97 aa)) is disordered. A compositionally biased stretch (basic and acidic residues) spans 321 to 332 (KFEERESSRQSE). Acidic residues-rich tracts occupy residues 344–360 (VEPEPEEEEEEEEEEKI) and 367–397 (EEEEEEEEEEEEEEEELEEEEEEEEEEEEDE).

It belongs to the calponin family. As to expression, expressed in pharyngeal muscle cells (at protein level).

Its function is as follows. Required for pharyngeal pumping. This chain is Calponin-like protein clik-2, found in Caenorhabditis elegans.